A 1466-amino-acid chain; its full sequence is Vacuolar protein sorting/targeting protein 10 (1466 aa).

A signal peptide spans 1–33 (MFFLTKILPLRGRIFPMFGCLLLIVSLITGCIA). Residues 34–1363 (SPAAEVAETV…YYKAHPKPGG (1330 aa)) lie on the Lumenal side of the membrane. BNR repeat units follow at residues 71 to 82 (YLSQDNGQSWRN), 115 to 126 (YYSYDNGENWDY), 388 to 399 (RITFDGGKTWST), 457 to 468 (FVSEDGGRNWTL), and 498 to 509 (YYSLDHGQSWVT). Asn465 carries N-linked (GlcNAc...) asparagine glycosylation. Asn545 carries N-linked (GlcNAc...) asparagine glycosylation. 3 BNR repeats span residues 738 to 749 (YFSEDEGKTWDK), 778 to 789 (YFTTNRGKNFYK), and 836 to 847 (FVSLDFGDTWSR). Asn986 carries N-linked (GlcNAc...) asparagine glycosylation. 3 BNR repeats span residues 1039–1050 (LITFNDGLDWSY), 1112–1123 (FISRDAGVTWYR), and 1153–1164 (KYSADEGRTWQE). Residues 1364–1384 (WSIFLTIIFSILLAAVAGCIL) form a helical membrane-spanning segment. The Cytoplasmic portion of the chain corresponds to 1385–1466 (YYYSRRFLKG…EIDDDDEESV (82 aa)).

The protein belongs to the VPS10-related sortilin family.

The protein resides in the golgi apparatus. The protein localises to the trans-Golgi network membrane. Its subcellular location is the prevacuolar compartment membrane. Functions as a sorting receptor in the Golgi compartment required for the intracellular sorting and delivery of soluble vacuolar proteins, like carboxypeptidase Y (CPY) and proteinase A. Executes multiple rounds of sorting by cycling between the late Golgi and a prevacuolar endosome-like compartment. The chain is Vacuolar protein sorting/targeting protein 10 (vps10) from Schizosaccharomyces pombe (strain 972 / ATCC 24843) (Fission yeast).